A 54-amino-acid chain; its full sequence is UPF0391 membrane protein Rfer_1875 (54 aa).

Transmembrane regions (helical) follow at residues 5–25 and 30–50; these read AVVF…GIAA and IGKI…LFGL.

Belongs to the UPF0391 family.

It is found in the cell membrane. The chain is UPF0391 membrane protein Rfer_1875 from Albidiferax ferrireducens (strain ATCC BAA-621 / DSM 15236 / T118) (Rhodoferax ferrireducens).